Consider the following 249-residue polypeptide: 4-hydroxy-tetrahydrodipicolinate reductase (249 aa).

Residues Asp-32, 74–76 (GTT), and 99–102 (SANY) each bind NAD(+). His-134 (proton donor/acceptor) is an active-site residue. Residue His-135 coordinates (S)-2,3,4,5-tetrahydrodipicolinate. Lys-138 (proton donor) is an active-site residue. A (S)-2,3,4,5-tetrahydrodipicolinate-binding site is contributed by 144–145 (GT).

The protein belongs to the DapB family.

The protein resides in the cytoplasm. It carries out the reaction (S)-2,3,4,5-tetrahydrodipicolinate + NAD(+) + H2O = (2S,4S)-4-hydroxy-2,3,4,5-tetrahydrodipicolinate + NADH + H(+). The enzyme catalyses (S)-2,3,4,5-tetrahydrodipicolinate + NADP(+) + H2O = (2S,4S)-4-hydroxy-2,3,4,5-tetrahydrodipicolinate + NADPH + H(+). Its pathway is amino-acid biosynthesis; L-lysine biosynthesis via DAP pathway; (S)-tetrahydrodipicolinate from L-aspartate: step 4/4. Its function is as follows. Catalyzes the conversion of 4-hydroxy-tetrahydrodipicolinate (HTPA) to tetrahydrodipicolinate. The protein is 4-hydroxy-tetrahydrodipicolinate reductase of Chlorobaculum tepidum (strain ATCC 49652 / DSM 12025 / NBRC 103806 / TLS) (Chlorobium tepidum).